A 274-amino-acid polypeptide reads, in one-letter code: HMP-PP phosphatase (274 aa).

Catalysis depends on Asp8, which acts as the Nucleophile. Residues Asp8, Asp10, and Asp213 each contribute to the Mg(2+) site.

This sequence belongs to the HAD-like hydrolase superfamily. Cof family. Mg(2+) serves as cofactor.

It catalyses the reaction 4-amino-2-methyl-5-(diphosphooxymethyl)pyrimidine + H2O = 4-amino-2-methyl-5-(phosphooxymethyl)pyrimidine + phosphate + H(+). Functionally, catalyzes the hydrolysis of 4-amino-2-methyl-5-hydroxymethylpyrimidine pyrophosphate (HMP-PP) to 4-amino-2-methyl-5-hydroxymethylpyrimidine phosphate (HMP-P). This Serratia proteamaculans (strain 568) protein is HMP-PP phosphatase.